A 354-amino-acid polypeptide reads, in one-letter code: 3-isopropylmalate dehydrogenase (354 aa).

76–87 (GPRWDGAKERPE) is an NAD(+) binding site. The substrate site is built by Arg-94, Arg-104, Arg-130, and Asp-215. Mg(2+) contacts are provided by Asp-215, Asp-239, and Asp-243. 273–285 (GSAPDIAGKNKAN) is an NAD(+) binding site.

It belongs to the isocitrate and isopropylmalate dehydrogenases family. LeuB type 1 subfamily. Homodimer. Mg(2+) serves as cofactor. Requires Mn(2+) as cofactor.

The protein resides in the cytoplasm. It carries out the reaction (2R,3S)-3-isopropylmalate + NAD(+) = 4-methyl-2-oxopentanoate + CO2 + NADH. The protein operates within amino-acid biosynthesis; L-leucine biosynthesis; L-leucine from 3-methyl-2-oxobutanoate: step 3/4. Its function is as follows. Catalyzes the oxidation of 3-carboxy-2-hydroxy-4-methylpentanoate (3-isopropylmalate) to 3-carboxy-4-methyl-2-oxopentanoate. The product decarboxylates to 4-methyl-2 oxopentanoate. In Bacillus cereus (strain ZK / E33L), this protein is 3-isopropylmalate dehydrogenase.